A 146-amino-acid chain; its full sequence is 3-hydroxyacyl-[acyl-carrier-protein] dehydratase FabZ (146 aa).

His-49 is an active-site residue.

The protein belongs to the thioester dehydratase family. FabZ subfamily.

The protein resides in the cytoplasm. The catalysed reaction is a (3R)-hydroxyacyl-[ACP] = a (2E)-enoyl-[ACP] + H2O. Involved in unsaturated fatty acids biosynthesis. Catalyzes the dehydration of short chain beta-hydroxyacyl-ACPs and long chain saturated and unsaturated beta-hydroxyacyl-ACPs. This chain is 3-hydroxyacyl-[acyl-carrier-protein] dehydratase FabZ, found in Pseudomonas fluorescens (strain ATCC BAA-477 / NRRL B-23932 / Pf-5).